The sequence spans 528 residues: Gamma-taxilin (528 aa).

The segment covering 1-10 (MATRVEEAAR) has biased composition (basic and acidic residues). The interval 1–36 (MATRVEEAARGRGGGAEEATEAGRGGRRRSPRQKFE) is disordered. Residues Arg-12 and Arg-24 each carry the omega-N-methylarginine modification. A phosphoserine mark is found at Ser-79, Ser-86, Ser-97, and Ser-105. The tract at residues 102 to 130 (TQESREEIPGGEARTDPPDGQQDSECNRN) is disordered. The segment covering 104–118 (ESREEIPGGEARTDP) has biased composition (basic and acidic residues). Residues 153–464 (EEKLAALCKK…LKEQVSIKAA (312 aa)) are a coiled coil. Tyr-283 is subject to Phosphotyrosine. Positions 486–528 (HKELNTSSKRALGAHLEAEPKSQRSAVQKPPSTGSAPAIESVD) are disordered. The segment covering 508-520 (QRSAVQKPPSTGS) has biased composition (polar residues). Ser-517 bears the Phosphoserine mark.

This sequence belongs to the taxilin family. As to quaternary structure, binds to the C-terminal coiled coil region of syntaxin family members STX1A, STX3A and STX4A. Forms a heterodimer with ATF4 in osteoblasts. As to expression, ubiquitously expressed. Expressed at high level in heart and skeletal muscle. Expressed in brain, placenta, lung, liver, kidney and pancreas.

It is found in the nucleus membrane. The protein localises to the cytoplasm. Its subcellular location is the cytosol. May be involved in intracellular vesicle traffic. Inhibits ATF4-mediated transcription, possibly by dimerizing with ATF4 to form inactive dimers that cannot bind DNA. May be involved in regulating bone mass density through an ATF4-dependent pathway. May be involved in cell cycle progression. In Homo sapiens (Human), this protein is Gamma-taxilin (TXLNG).